A 260-amino-acid polypeptide reads, in one-letter code: Ribonuclease HII (260 aa).

Residues 70 to 260 (QAIAGIDEVG…PIKSMLKEKN (191 aa)) form the RNase H type-2 domain. Positions 76, 77, and 171 each coordinate a divalent metal cation.

It belongs to the RNase HII family. Mn(2+) serves as cofactor. The cofactor is Mg(2+).

It is found in the cytoplasm. It catalyses the reaction Endonucleolytic cleavage to 5'-phosphomonoester.. Endonuclease that specifically degrades the RNA of RNA-DNA hybrids. This Streptococcus mutans serotype c (strain ATCC 700610 / UA159) protein is Ribonuclease HII.